We begin with the raw amino-acid sequence, 1033 residues long: Error-prone DNA polymerase (1033 aa).

This sequence belongs to the DNA polymerase type-C family. DnaE2 subfamily.

The protein resides in the cytoplasm. The catalysed reaction is DNA(n) + a 2'-deoxyribonucleoside 5'-triphosphate = DNA(n+1) + diphosphate. DNA polymerase involved in damage-induced mutagenesis and translesion synthesis (TLS). It is not the major replicative DNA polymerase. This chain is Error-prone DNA polymerase, found in Teredinibacter turnerae (strain ATCC 39867 / T7901).